A 63-amino-acid polypeptide reads, in one-letter code: Large ribosomal subunit protein uL30 (63 aa).

This sequence belongs to the universal ribosomal protein uL30 family. As to quaternary structure, part of the 50S ribosomal subunit.

The sequence is that of Large ribosomal subunit protein uL30 from Rickettsia massiliae (strain Mtu5).